The sequence spans 221 residues: Putative hemin import ATP-binding protein HrtA (221 aa).

The 219-residue stretch at 3–221 folds into the ABC transporter domain; the sequence is LVVKDIVKNF…IELEDGKITD (219 aa). 39–46 serves as a coordination point for ATP; the sequence is GASGSGKT.

It belongs to the ABC transporter superfamily. HrtA family. The complex is composed of two ATP-binding proteins (HrtA), two transmembrane proteins (HrtB) and a solute-binding protein.

The protein resides in the cell membrane. Part of the ABC transporter complex hrt involved in hemin import. Responsible for energy coupling to the transport system. The polypeptide is Putative hemin import ATP-binding protein HrtA (hrtA) (Staphylococcus aureus (strain MRSA252)).